Consider the following 457-residue polypeptide: Cysteine--tRNA ligase (457 aa).

Residue cysteine 28 coordinates Zn(2+). The short motif at 30 to 40 is the 'HIGH' region element; sequence ITVYDLCHIGH. 3 residues coordinate Zn(2+): cysteine 209, histidine 234, and glutamate 238. The short motif at 266–270 is the 'KMSKS' region element; it reads KMSKS. Lysine 269 contacts ATP.

Belongs to the class-I aminoacyl-tRNA synthetase family. As to quaternary structure, monomer. It depends on Zn(2+) as a cofactor.

It localises to the cytoplasm. The catalysed reaction is tRNA(Cys) + L-cysteine + ATP = L-cysteinyl-tRNA(Cys) + AMP + diphosphate. The polypeptide is Cysteine--tRNA ligase (Sodalis glossinidius (strain morsitans)).